The following is a 311-amino-acid chain: Oxygen-dependent coproporphyrinogen-III oxidase (311 aa).

Ser-93 lines the substrate pocket. His-97 and His-107 together coordinate a divalent metal cation. His-107 functions as the Proton donor in the catalytic mechanism. Position 109-111 (109-111 (NVR)) interacts with substrate. Residues His-153 and His-184 each contribute to the a divalent metal cation site. Positions 252-287 (YVEFNLVFDRGTLFGLQSGGRTESILMSLPPVVKWR) are important for dimerization. Substrate is bound at residue 270–272 (GGR).

It belongs to the aerobic coproporphyrinogen-III oxidase family. In terms of assembly, homodimer. A divalent metal cation is required as a cofactor.

It localises to the cytoplasm. The enzyme catalyses coproporphyrinogen III + O2 + 2 H(+) = protoporphyrinogen IX + 2 CO2 + 2 H2O. The protein operates within porphyrin-containing compound metabolism; protoporphyrin-IX biosynthesis; protoporphyrinogen-IX from coproporphyrinogen-III (O2 route): step 1/1. Functionally, involved in the heme biosynthesis. Catalyzes the aerobic oxidative decarboxylation of propionate groups of rings A and B of coproporphyrinogen-III to yield the vinyl groups in protoporphyrinogen-IX. The chain is Oxygen-dependent coproporphyrinogen-III oxidase from Aromatoleum aromaticum (strain DSM 19018 / LMG 30748 / EbN1) (Azoarcus sp. (strain EbN1)).